The primary structure comprises 680 residues: Leucine-rich repeat and calponin homology domain-containing protein 4 (680 aa).

Positions 1-22 (MAAAVAGPLAAGGEEAAASVSL) are enriched in low complexity. The disordered stretch occupies residues 1-35 (MAAAVAGPLAAGGEEAAASVSLPGSPGLPGSRSAE). LRR repeat units follow at residues 41–64 (AVAT…AARS), 67–90 (LSDI…ACQL), 92–113 (SLEG…LGNL), 114–136 (TALT…ICQL), 138–158 (LRVL…ISTL), 159–181 (GSLR…LCSL), 182–204 (RSLR…LGDL), 206–226 (LVRL…FCRL), and 227–250 (RHLQ…CLKG). 6 positions are modified to phosphoserine: S279, S281, S304, S307, S309, and S313. The interval 329 to 528 (SELARDPRGP…PSSPESVLRP (200 aa)) is disordered. Basic and acidic residues predominate over residues 330 to 345 (ELARDPRGPRQPREDG). Acidic residues predominate over residues 346–355 (AGDGDLEQID). 2 stretches are compositionally biased toward basic and acidic residues: residues 357–371 (IDSH…RSAA) and 385–418 (DVEK…ERKQ). A Phosphoserine modification is found at S432. Composition is skewed to low complexity over residues 440–453 (AAGA…TQAT) and 510–528 (RSSS…VLRP). S511, S513, S517, S521, and S586 each carry phosphoserine. One can recognise a Calponin-homology (CH) domain in the interval 531-644 (FPQEKELISQ…VLEAVILVGG (114 aa)). Residues 655–675 (GLGGFLLFYVVFMLLLYVVYT) form a helical membrane-spanning segment.

As to expression, widely expressed across tissues, with the most abundant expression in spleen, testes, thymus, intestine, and blood. Expressed in macrophages.

The protein resides in the cell membrane. Accessory protein that regulates signaling by multiple TLRs, acting as a broad-spanning regulator of the innate immune response. In macrophages, binds LPS and promotes proper docking of LPS in lipid raft membrane. May be required for lipid raft maintenance. The chain is Leucine-rich repeat and calponin homology domain-containing protein 4 (Lrch4) from Mus musculus (Mouse).